Consider the following 201-residue polypeptide: Flavin prenyltransferase UbiX (201 aa).

FMN is bound by residues 23–25 (GAS), S49, 103–106 (SIKT), and R138. Dimethylallyl phosphate contacts are provided by Y168 and K184.

The protein belongs to the UbiX/PAD1 family.

The enzyme catalyses dimethylallyl phosphate + FMNH2 = prenylated FMNH2 + phosphate. Its function is as follows. Flavin prenyltransferase that catalyzes the synthesis of the prenylated FMN cofactor (prenyl-FMN) for 4-hydroxy-3-polyprenylbenzoic acid decarboxylase UbiD. The prenyltransferase is metal-independent and links a dimethylallyl moiety from dimethylallyl monophosphate (DMAP) to the flavin N5 and C6 atoms of FMN. The polypeptide is Flavin prenyltransferase UbiX (Saccharolobus solfataricus (strain ATCC 35092 / DSM 1617 / JCM 11322 / P2) (Sulfolobus solfataricus)).